The chain runs to 459 residues: MKTVILSVNAGSSSVKLSAYTAEQGQSPIQIAEVQVSGLTAPPASLKYERGGKTIVKSREVDDQVSDQRDAFSLILKTLIEDDDLHDIQTKDDIGIICHRIVHGGDYTKPQLITNGTYHHLENLNDLAPLHNANSLPIVRLCVQDFPSARNVACFDSQFHSTIPEHIRTYPINQDIARRGRLRKYGFHGISYSFITRATAEFLGKDPSDVNIIALHLGSGASACAIKGGKSWDTSMGLTPLAGLPGATRSGSVDPSLVFHYASDVGKLSPASTKDLHISRAEEILNKQAGWKALTGTTDFRVIAAAATTTSSPTPSPNPNPNPNPDPNPDPNPDPQNQNHRLAFALLVDRISAFVGAYYVSLHGRVDALVFAGGIGERSAALRAAVVEQVGCLGFAADGDEDFDGDGGEGAVVVDVGREAAGGSDLGGRPRPRVLVCRTDEQFEMARMCAEDAEFWGSG.

Asn-9 is a binding site for Mg(2+). An ATP-binding site is contributed by Lys-16. Residue Arg-100 coordinates substrate. Residue Asp-156 is the Proton donor/acceptor of the active site. ATP-binding positions include 216-220 and 299-301; these read HLGSG and DFR. The disordered stretch occupies residues 308 to 338; the sequence is TTTSSPTPSPNPNPNPNPDPNPDPNPDPQNQ. The span at 314-334 shows a compositional bias: pro residues; it reads TPSPNPNPNPNPDPNPDPNPD. Glu-441 contributes to the Mg(2+) binding site.

It belongs to the acetokinase family. The cofactor is Mg(2+).

The catalysed reaction is acetate + ATP = acetyl phosphate + ADP. It functions in the pathway metabolic intermediate biosynthesis; acetyl-CoA biosynthesis; acetyl-CoA from acetate: step 1/2. The chain is Probable acetate kinase from Chaetomium globosum (strain ATCC 6205 / CBS 148.51 / DSM 1962 / NBRC 6347 / NRRL 1970) (Soil fungus).